An 846-amino-acid polypeptide reads, in one-letter code: Envelope glycoprotein gp160 (846 aa).

Residues 1-21 (MSGKIQLLVAFLLTSACLIYC) form the signal peptide. Residues 22–671 (TKYVTVFYGV…LTSWIKYIQY (650 aa)) are Extracellular-facing. N-linked (GlcNAc...) asparagine; by host glycosylation is present at Asn36. Cys43 and Cys56 are disulfide-bonded. 21 N-linked (GlcNAc...) asparagine; by host glycosylation sites follow: Asn69, Asn113, Asn132, Asn142, Asn157, Asn184, Asn197, Asn229, Asn232, Asn239, Asn263, Asn269, Asn280, Asn291, Asn301, Asn357, Asn363, Asn390, Asn400, Asn455, and Asn458. Cystine bridges form between Cys100-Cys205, Cys107-Cys196, Cys112-Cys154, Cys218-Cys248, and Cys228-Cys240. The segment at 112-153 (CNASTESAVATTSPSGPDMINDTDPCIQLNNCSGLREEDMVE) is V1. The tract at residues 154 to 196 (CQFNMTGLELDKKKQYSETWYSKDVVCESDNSTDRKRCYMNHC) is V2. The segment at 296–329 (CRRPENKTVVPITLMSGRRFHSQKIINKKPRQAW) is V3. Cysteines 296 and 330 form a disulfide. 2 disulfides stabilise this stretch: Cys382-Cys438 and Cys389-Cys411. Positions 389–411 (CNMTWFLNWVENKTGQQHNYVPC) are V4. The V5 stretch occupies residues 454–461 (DNRTNITF). The fusion peptide stretch occupies residues 504-524 (GVLVLGFLGFLTTAGAAMGAA). Residues 567-583 (LQARVTAIEKYLADQAR) form an immunosuppression region. Asn603, Asn612, and Asn628 each carry an N-linked (GlcNAc...) asparagine; by host glycan. A coiled-coil region spans residues 616 to 643 (QEWEHKIRFLEANISESLEQAQIQQEKN). The interval 649-670 (KLNSWDVFGNWFDLTSWIKYIQ) is MPER; binding to GalCer. A helical membrane pass occupies residues 672–692 (GVMIVVGIVALRIVIYVVQML). The Cytoplasmic segment spans residues 693–846 (SRLRKGYRPV…IRQGAEIALL (154 aa)). The YXXV motif; contains endocytosis signal signature appears at 699–702 (YRPV). Cys765 carries S-palmitoyl cysteine; by host lipidation. The Di-leucine internalization motif signature appears at 845–846 (LL).

The mature envelope protein (Env) consists of a homotrimer of non-covalently associated gp120-gp41 heterodimers. The resulting complex protrudes from the virus surface as a spike. There seems to be as few as 10 spikes on the average virion. Interacts with human CD4, CCR5 and CXCR4, to form a P4HB/PDI-CD4-CXCR4-gp120 complex. Gp120 also interacts with the C-type lectins CD209/DC-SIGN and CLEC4M/DC-SIGNR (collectively referred to as DC-SIGN(R)). Gp120 and gp41 interact with GalCer. As to quaternary structure, the mature envelope protein (Env) consists of a homotrimer of non-covalently associated gp120-gp41 heterodimers. The resulting complex protrudes from the virus surface as a spike. There seems to be as few as 10 spikes on the average virion. In terms of processing, specific enzymatic cleavages in vivo yield mature proteins. Envelope glycoproteins are synthesized as an inactive precursor that is heavily N-glycosylated and processed likely by host cell furin in the Golgi to yield the mature SU and TM proteins. The cleavage site between SU and TM requires the minimal sequence [KR]-X-[KR]-R. Palmitoylation of the transmembrane protein and of Env polyprotein (prior to its proteolytic cleavage) is essential for their association with host cell membrane lipid rafts. Palmitoylation is therefore required for envelope trafficking to classical lipid rafts, but not for viral replication.

It localises to the virion membrane. The protein localises to the host cell membrane. It is found in the host endosome membrane. Functionally, the surface protein gp120 (SU) attaches the virus to the host lymphoid cell by binding to the primary receptor CD4. This interaction induces a structural rearrangement creating a high affinity binding site for a chemokine coreceptor like CXCR4 and/or CCR5. This peculiar 2 stage receptor-interaction strategy allows gp120 to maintain the highly conserved coreceptor-binding site in a cryptic conformation, protected from neutralizing antibodies. Since CD4 also displays a binding site for the disulfide-isomerase P4HB/PDI, a P4HB/PDI-CD4-CXCR4-gp120 complex may form. In that complex, P4HB/PDI could reach and reduce gp120 disulfide bonds, causing major conformational changes in gp120. TXN, another PDI family member could also be involved in disulfide rearrangements in Env during fusion. These changes are transmitted to the transmembrane protein gp41 and are thought to activate its fusogenic potential by unmasking its fusion peptide. In terms of biological role, the surface protein gp120 is a ligand for CD209/DC-SIGN and CLEC4M/DC-SIGNR, which are respectively found on dendritic cells (DCs), and on endothelial cells of liver sinusoids and lymph node sinuses. These interactions allow capture of viral particles at mucosal surfaces by these cells and subsequent transmission to permissive cells. DCs are professional antigen presenting cells, critical for host immunity by inducing specific immune responses against a broad variety of pathogens. They act as sentinels in various tissues where they take up antigen, process it, and present it to T-cells following migration to lymphoid organs. HIV subverts the migration properties of dendritic cells to gain access to CD4+ T-cells in lymph nodes. Virus transmission to permissive T-cells occurs either in trans (without DCs infection, through viral capture and transmission), or in cis (following DCs productive infection, through the usual CD4-gp120 interaction), thereby inducing a robust infection. In trans infection, bound virions remain infectious over days and it is proposed that they are not degraded, but protected in non-lysosomal acidic organelles within the DCs close to the cell membrane thus contributing to the viral infectious potential during DCs' migration from the periphery to the lymphoid tissues. On arrival at lymphoid tissues, intact virions recycle back to DCs' cell surface allowing virus transmission to CD4+ T-cells. Virion capture also seems to lead to MHC-II-restricted viral antigen presentation, and probably to the activation of HIV-specific CD4+ cells. Its function is as follows. The transmembrane protein gp41 (TM) acts as a class I viral fusion protein. Under the current model, the protein has at least 3 conformational states: pre-fusion native state, pre-hairpin intermediate state, and post-fusion hairpin state. During fusion of viral and target intracellular membranes, the coiled coil regions (heptad repeats) assume a trimer-of-hairpins structure, positioning the fusion peptide in close proximity to the C-terminal region of the ectodomain. The formation of this structure appears to drive apposition and subsequent fusion of viral and target cell membranes. Complete fusion occurs in host cell endosomes and is dynamin-dependent, however some lipid transfer might occur at the plasma membrane. The virus undergoes clathrin-dependent internalization long before endosomal fusion, thus minimizing the surface exposure of conserved viral epitopes during fusion and reducing the efficacy of inhibitors targeting these epitopes. Membranes fusion leads to delivery of the nucleocapsid into the cytoplasm. The envelope glycoprotein gp160 precursor down-modulates cell surface CD4 antigen by interacting with it in the endoplasmic reticulum and blocking its transport to the cell surface. Functionally, the gp120-gp41 heterodimer seems to contribute to T-cell depletion during HIV-1 infection. The envelope glycoproteins expressed on the surface of infected cells induce apoptosis through an interaction with uninfected cells expressing the receptor (CD4) and the coreceptors CXCR4 or CCR5. This type of bystander killing may be obtained by at least three distinct mechanisms. First, the interaction between the 2 cells can induce cellular fusion followed by nuclear fusion within the syncytium. Syncytia are condemned to die from apoptosis. Second, the 2 interacting cells may not fuse entirely and simply exchange plasma membrane lipids, after a sort of hemifusion process, followed by rapid death. Third, it is possible that virus-infected cells, on the point of undergoing apoptosis, fuse with CD4-expressing cells, in which case apoptosis is rapidly transmitted from one cell to the other and thus occurs in a sort of contagious fashion. In terms of biological role, the gp120-gp41 heterodimer allows rapid transcytosis of the virus through CD4 negative cells such as simple epithelial monolayers of the intestinal, rectal and endocervical epithelial barriers. Both gp120 and gp41 specifically recognize glycosphingolipids galactosyl-ceramide (GalCer) or 3' sulfo-galactosyl-ceramide (GalS) present in the lipid rafts structures of epithelial cells. Binding to these alternative receptors allows the rapid transcytosis of the virus through the epithelial cells. This transcytotic vesicle-mediated transport of virions from the apical side to the basolateral side of the epithelial cells does not involve infection of the cells themselves. The protein is Envelope glycoprotein gp160 (env) of Human immunodeficiency virus type 2 subtype A (isolate SBLISY) (HIV-2).